The primary structure comprises 332 residues: D-amino acid oxidase (332 aa).

Residues Ala-8, Gly-9, Ile-10, Thr-39, Thr-40, Ala-45, Gly-46, Leu-47, Val-161, and Ser-180 each contribute to the FAD site. D-proline contacts are provided by Tyr-218 and Arg-274. D-serine-binding residues include Tyr-218 and Arg-274. The FAD site is built by Arg-274, Gly-305, Gly-306, Gly-308, and Thr-310. Gly-306 is a D-proline binding site. Position 306 (Gly-306) interacts with D-serine. The short motif at 330 to 332 (AKL) is the Microbody targeting signal element.

The protein belongs to the DAMOX/DASOX family. FAD is required as a cofactor.

Its subcellular location is the peroxisome matrix. The enzyme catalyses a D-alpha-amino acid + O2 + H2O = a 2-oxocarboxylate + H2O2 + NH4(+). It catalyses the reaction D-alanine + O2 + H2O = pyruvate + H2O2 + NH4(+). It carries out the reaction D-arginine + O2 + H2O = 5-guanidino-2-oxopentanoate + H2O2 + NH4(+). The catalysed reaction is D-asparagine + O2 + H2O = 2-oxosuccinamate + H2O2 + NH4(+). The enzyme catalyses D-cysteine + O2 + H2O = 2-oxo-3-sulfanylpropanoate + H2O2 + NH4(+). It catalyses the reaction D-glutamine + O2 + H2O = 2-oxoglutaramate + H2O2 + NH4(+). It carries out the reaction D-isoleucine + O2 + H2O = (R)-3-methyl-2-oxopentanoate + H2O2 + NH4(+). The catalysed reaction is D-leucine + O2 + H2O = 4-methyl-2-oxopentanoate + H2O2 + NH4(+). The enzyme catalyses D-lysine + O2 + H2O = 6-amino-2-oxohexanoate + H2O2 + NH4(+). It catalyses the reaction D-methionine + O2 + H2O = 4-methylsulfanyl-2-oxobutanoate + H2O2 + NH4(+). It carries out the reaction D-phenylalanine + O2 + H2O = 3-phenylpyruvate + H2O2 + NH4(+). The catalysed reaction is D-proline + O2 = 1-pyrroline-2-carboxylate + H2O2. The enzyme catalyses D-valine + O2 + H2O = 3-methyl-2-oxobutanoate + H2O2 + NH4(+). It catalyses the reaction D-histidine + O2 + H2O = 3-(imidazol-5-yl)pyruvate + H2O2 + NH4(+). It carries out the reaction D-tyrosine + O2 + H2O = 3-(4-hydroxyphenyl)pyruvate + H2O2 + NH4(+). The catalysed reaction is D-serine + O2 + H2O = 3-hydroxypyruvate + H2O2 + NH4(+). The enzyme catalyses D-threonine + O2 + H2O = (S)-3-hydroxy-2-oxobutanoate + H2O2 + NH4(+). It catalyses the reaction D-tryptophan + O2 + H2O = indole-3-pyruvate + H2O2 + NH4(+). In terms of biological role, catalyzes the oxidative deamination of D-amino acids with broad substrate specificity. Could be responsible for the degradation of diet-derived D-alanine in the intestine. Maintains the asexual state of worms and represses early ovarian development. Following sexual induction, the enzyme is required for differentiation of oogonia into oocytes in the developing ovaries. The polypeptide is D-amino acid oxidase (Dugesia ryukyuensis (Freshwater planarian flatworm)).